Reading from the N-terminus, the 429-residue chain is TNF receptor-associated factor family protein DDB_G0267744 (429 aa).

The RING-type; degenerate zinc finger occupies cysteine 22–arginine 60. TRAF-type zinc fingers lie at residues histidine 151–asparagine 203 and asparagine 204–glutamate 265.

The protein belongs to the TNF receptor-associated factor family.

The protein resides in the cytoplasm. Functionally, probable adapter protein and signal transducer that links members of the tumor necrosis factor receptor family to different signaling pathways by association with the receptor cytoplasmic domain and kinases. This is TNF receptor-associated factor family protein DDB_G0267744 from Dictyostelium discoideum (Social amoeba).